Consider the following 156-residue polypeptide: Terrestric acid biosynthesis cluster protein E (156 aa).

It participates in secondary metabolite biosynthesis. Part of the tra gene cluster that produces terrestric acid. The clavatol biosynthesis cluster cla and the terrestric acid cluster tra are both involved in the production of peniphenones and penilactones. The non-reducing PKS claF is responsible for the formation of clavatol from successive condensations of 3 malonyl-CoA units, presumably with a simple acetyl-CoA starter unit, and 2 methylation steps. The esterase claE probably collaborates with claF by catalyzing the hydrolysis of ACP-bound acyl intermediates to free the ACP from stalled intermediates. The clavatol oxidase claD then converts clavatol to hydroxyclavatol. Spontaneous dehydration of hydroxyclavatol leads to the accumulation of the highly active ortho-quinone methide. On the other hand, the PKS-NRPS hybrid traA is involved in the formation of crustosic acid, with the help of traB and traD. The polyketide synthase module (PKS) of traA is responsible for the synthesis of the polyketide backbone via the condensation of an acetyl-CoA starter unit with 3 malonyl-CoA units. The downstream nonribosomal peptide synthetase (NRPS) module then amidates the carboxyl end of the polyketide with L-malic acid. Because traA lacks a designated enoylreductase (ER) domain, the required activity is provided the enoyl reductase traG. Crustosic acid undergoes decarboxylation and isomerization to the terrestric acid, catalyzed by the 2-oxoglutarate-dependent dioxygenase traH. Both acids are further converted to the 2 gamma-butyrolactones (R)-5-methyltetronic acid and (S)-5-carboxylmethyltetronic acid, with involvement of the cytochrome P450 monooxygenase claJ. Spontaneous addition of the methide to these gamma-butyrolactones leads to peniphenone D and penilactone D, which undergo again stereospecific attacking by methide to give penilactones A and B. TraE seems not to be involved in the biosynthesis of peniphenones and penilactones in the conditions used to study its function. This chain is Terrestric acid biosynthesis cluster protein E, found in Penicillium crustosum (Blue mold fungus).